The chain runs to 110 residues: Large ribosomal subunit protein uL24 (110 aa).

Belongs to the universal ribosomal protein uL24 family. As to quaternary structure, part of the 50S ribosomal subunit.

One of two assembly initiator proteins, it binds directly to the 5'-end of the 23S rRNA, where it nucleates assembly of the 50S subunit. Functionally, one of the proteins that surrounds the polypeptide exit tunnel on the outside of the subunit. The chain is Large ribosomal subunit protein uL24 from Chloroflexus aurantiacus (strain ATCC 29366 / DSM 635 / J-10-fl).